The following is a 55-amino-acid chain: Small ribosomal subunit protein eS31 (55 aa).

Zn(2+) is bound by residues Cys27, Cys30, Cys45, and Cys48. The segment at 27 to 48 (CSRCGKGFFMAQHKDRRSCGKC) adopts a C4-type zinc-finger fold.

The protein belongs to the eukaryotic ribosomal protein eS31 family. In terms of assembly, part of the 30S ribosomal subunit. Requires Zn(2+) as cofactor.

This is Small ribosomal subunit protein eS31 from Cenarchaeum symbiosum (strain A).